Reading from the N-terminus, the 402-residue chain is Phosphoglycerate kinase (402 aa).

Residues 24–26 (DFN), Arg-40, 63–66 (HFGR), Arg-122, and Arg-155 each bind substrate. Residues Lys-206, Gly-297, Glu-328, and 357-360 (GGDS) contribute to the ATP site.

Belongs to the phosphoglycerate kinase family. In terms of assembly, monomer.

The protein localises to the cytoplasm. It carries out the reaction (2R)-3-phosphoglycerate + ATP = (2R)-3-phospho-glyceroyl phosphate + ADP. It participates in carbohydrate degradation; glycolysis; pyruvate from D-glyceraldehyde 3-phosphate: step 2/5. The sequence is that of Phosphoglycerate kinase from Prochlorococcus marinus (strain MIT 9211).